The following is a 71-amino-acid chain: uncharacterized protein (71 aa).

Over 1–16 (MLLLYTVMILTCIIYK) the chain is Cytoplasmic. A helical transmembrane segment spans residues 17–38 (LVPDNKYWPIHMFFFIMIYIVY). Topologically, residues 39–69 (MYEKLDIHEKSQFWNYTMARLSGHPVPTIIC) are extracellular. Asn53 is a glycosylation site (N-linked (GlcNAc...) asparagine; by host).

Belongs to the asfivirus X69R family.

It localises to the host membrane. This is an uncharacterized protein from African swine fever virus (isolate Pig/Kenya/KEN-50/1950) (ASFV).